Consider the following 437-residue polypeptide: GTPase Obg (437 aa).

Positions 2–160 (SMFLDTAKIS…RQLELELKIL (159 aa)) constitute an Obg domain. Positions 161–338 (ADVGLVGFPS…LLEATAELLA (178 aa)) constitute an OBG-type G domain. GTP is bound by residues 167 to 174 (GFPSVGKS), 192 to 196 (FTTIV), 214 to 217 (DLPG), 284 to 287 (NKMD), and 319 to 321 (SSL). The Mg(2+) site is built by serine 174 and threonine 194. The OCT domain maps to 359 to 437 (GFAETEKDFE…IGKFEFEFVD (79 aa)).

This sequence belongs to the TRAFAC class OBG-HflX-like GTPase superfamily. OBG GTPase family. As to quaternary structure, monomer. Requires Mg(2+) as cofactor.

It is found in the cytoplasm. An essential GTPase which binds GTP, GDP and possibly (p)ppGpp with moderate affinity, with high nucleotide exchange rates and a fairly low GTP hydrolysis rate. Plays a role in control of the cell cycle, stress response, ribosome biogenesis and in those bacteria that undergo differentiation, in morphogenesis control. This is GTPase Obg from Streptococcus pyogenes serotype M1.